We begin with the raw amino-acid sequence, 535 residues long: CTP synthase (535 aa).

The amidoligase domain stretch occupies residues Met1 to Ile266. Ser14 contributes to the CTP binding site. Residue Ser14 participates in UTP binding. Residues Ser15–Leu20 and Asp72 contribute to the ATP site. Positions 72 and 140 each coordinate Mg(2+). Residues Asp147–Glu149, Lys187–Gln192, and Lys223 each bind CTP. UTP contacts are provided by residues Lys187–Gln192 and Lys223. Residues Arg292–Ala534 form the Glutamine amidotransferase type-1 domain. Gly354 contacts L-glutamine. Cys381 (nucleophile; for glutamine hydrolysis) is an active-site residue. Residues Leu382–Gln385, Glu405, and Arg462 each bind L-glutamine. Catalysis depends on residues His507 and Glu509.

This sequence belongs to the CTP synthase family. Homotetramer.

The enzyme catalyses UTP + L-glutamine + ATP + H2O = CTP + L-glutamate + ADP + phosphate + 2 H(+). The catalysed reaction is L-glutamine + H2O = L-glutamate + NH4(+). It catalyses the reaction UTP + NH4(+) + ATP = CTP + ADP + phosphate + 2 H(+). The protein operates within pyrimidine metabolism; CTP biosynthesis via de novo pathway; CTP from UDP: step 2/2. Allosterically activated by GTP, when glutamine is the substrate; GTP has no effect on the reaction when ammonia is the substrate. The allosteric effector GTP functions by stabilizing the protein conformation that binds the tetrahedral intermediate(s) formed during glutamine hydrolysis. Inhibited by the product CTP, via allosteric rather than competitive inhibition. Functionally, catalyzes the ATP-dependent amination of UTP to CTP with either L-glutamine or ammonia as the source of nitrogen. Regulates intracellular CTP levels through interactions with the four ribonucleotide triphosphates. This is CTP synthase from Pelobacter propionicus (strain DSM 2379 / NBRC 103807 / OttBd1).